Reading from the N-terminus, the 402-residue chain is Formate-dependent phosphoribosylglycinamide formyltransferase (402 aa).

N(1)-(5-phospho-beta-D-ribosyl)glycinamide-binding positions include 23–24 (EL) and Glu-83. ATP-binding positions include Arg-116, Lys-157, 162-167 (SSGKGQ), 197-200 (ESQI), and Glu-205. An ATP-grasp domain is found at 121–316 (RLAAEELGLP…EFELHARAIL (196 aa)). Positions 275 and 287 each coordinate Mg(2+). N(1)-(5-phospho-beta-D-ribosyl)glycinamide-binding positions include Asp-294, Lys-363, and 370 to 371 (RR).

This sequence belongs to the PurK/PurT family. Homodimer.

The enzyme catalyses N(1)-(5-phospho-beta-D-ribosyl)glycinamide + formate + ATP = N(2)-formyl-N(1)-(5-phospho-beta-D-ribosyl)glycinamide + ADP + phosphate + H(+). The protein operates within purine metabolism; IMP biosynthesis via de novo pathway; N(2)-formyl-N(1)-(5-phospho-D-ribosyl)glycinamide from N(1)-(5-phospho-D-ribosyl)glycinamide (formate route): step 1/1. In terms of biological role, involved in the de novo purine biosynthesis. Catalyzes the transfer of formate to 5-phospho-ribosyl-glycinamide (GAR), producing 5-phospho-ribosyl-N-formylglycinamide (FGAR). Formate is provided by PurU via hydrolysis of 10-formyl-tetrahydrofolate. The sequence is that of Formate-dependent phosphoribosylglycinamide formyltransferase from Acinetobacter baumannii (strain ATCC 17978 / DSM 105126 / CIP 53.77 / LMG 1025 / NCDC KC755 / 5377).